Consider the following 161-residue polypeptide: 3-isopropylmalate dehydratase small subunit (161 aa).

It belongs to the LeuD family. LeuD type 2 subfamily. In terms of assembly, heterodimer of LeuC and LeuD.

It catalyses the reaction (2R,3S)-3-isopropylmalate = (2S)-2-isopropylmalate. It participates in amino-acid biosynthesis; L-leucine biosynthesis; L-leucine from 3-methyl-2-oxobutanoate: step 2/4. Catalyzes the isomerization between 2-isopropylmalate and 3-isopropylmalate, via the formation of 2-isopropylmaleate. The sequence is that of 3-isopropylmalate dehydratase small subunit from Metallosphaera sedula (strain ATCC 51363 / DSM 5348 / JCM 9185 / NBRC 15509 / TH2).